Reading from the N-terminus, the 213-residue chain is Thymidylate kinase (213 aa).

10–17 serves as a coordination point for ATP; the sequence is GLEGAGKT.

Belongs to the thymidylate kinase family.

It catalyses the reaction dTMP + ATP = dTDP + ADP. In terms of biological role, phosphorylation of dTMP to form dTDP in both de novo and salvage pathways of dTTP synthesis. The chain is Thymidylate kinase from Klebsiella pneumoniae subsp. pneumoniae (strain ATCC 700721 / MGH 78578).